A 131-amino-acid chain; its full sequence is Holo-[acyl-carrier-protein] synthase (131 aa).

Residues Asp8 and Glu59 each contribute to the Mg(2+) site.

The protein belongs to the P-Pant transferase superfamily. AcpS family. Mg(2+) is required as a cofactor.

It localises to the cytoplasm. The enzyme catalyses apo-[ACP] + CoA = holo-[ACP] + adenosine 3',5'-bisphosphate + H(+). Its function is as follows. Transfers the 4'-phosphopantetheine moiety from coenzyme A to a Ser of acyl-carrier-protein. In Orientia tsutsugamushi (strain Boryong) (Rickettsia tsutsugamushi), this protein is Holo-[acyl-carrier-protein] synthase.